Reading from the N-terminus, the 122-residue chain is Large ribosomal subunit protein uL14 (122 aa).

The protein belongs to the universal ribosomal protein uL14 family. In terms of assembly, part of the 50S ribosomal subunit. Forms a cluster with proteins L3 and L19. In the 70S ribosome, L14 and L19 interact and together make contacts with the 16S rRNA in bridges B5 and B8.

Binds to 23S rRNA. Forms part of two intersubunit bridges in the 70S ribosome. In Borrelia turicatae (strain 91E135), this protein is Large ribosomal subunit protein uL14.